A 467-amino-acid polypeptide reads, in one-letter code: ATP synthase subunit beta (467 aa).

150–157 (GGAGVGKT) is an ATP binding site.

The protein belongs to the ATPase alpha/beta chains family. F-type ATPases have 2 components, CF(1) - the catalytic core - and CF(0) - the membrane proton channel. CF(1) has five subunits: alpha(3), beta(3), gamma(1), delta(1), epsilon(1). CF(0) has three main subunits: a(1), b(2) and c(9-12). The alpha and beta chains form an alternating ring which encloses part of the gamma chain. CF(1) is attached to CF(0) by a central stalk formed by the gamma and epsilon chains, while a peripheral stalk is formed by the delta and b chains.

The protein resides in the cell inner membrane. It catalyses the reaction ATP + H2O + 4 H(+)(in) = ADP + phosphate + 5 H(+)(out). Produces ATP from ADP in the presence of a proton gradient across the membrane. The catalytic sites are hosted primarily by the beta subunits. The protein is ATP synthase subunit beta of Vibrio vulnificus (strain YJ016).